The chain runs to 144 residues: Large ribosomal subunit protein uL15 (144 aa).

The disordered stretch occupies residues 1–44 (MKLNELMPSEGSRTNRKRIGRGTSSGTGKTAGRGQKGQKARGKV). Residues 23–35 (TSSGTGKTAGRGQ) are compositionally biased toward gly residues.

Belongs to the universal ribosomal protein uL15 family. Part of the 50S ribosomal subunit.

Binds to the 23S rRNA. The protein is Large ribosomal subunit protein uL15 of Pediococcus pentosaceus (strain ATCC 25745 / CCUG 21536 / LMG 10740 / 183-1w).